Here is a 1375-residue protein sequence, read N- to C-terminus: Ubiquitin carboxyl-terminal hydrolase 47 (1375 aa).

Position 122 is an N6-acetyllysine (K122). A USP domain is found at 188–564 (VGLVNQAMTC…NAYMLIYRLK (377 aa)). Catalysis depends on C197, which acts as the Nucleophile. Residues 425-452 (DEKSPQTESCTDSGAENEGSCHSDQMSN) are disordered. Positions 430–452 (QTESCTDSGAENEGSCHSDQMSN) are enriched in polar residues. Residue H503 is the Proton acceptor of the active site. At S832 the chain carries Phosphoserine. Disordered stretches follow at residues 840-859 (TAYQKAGGDSGNVDDDCERV), 880-968 (LKSL…SHSS), and 983-1024 (NGLD…ESGK). Residues 882–899 (SLSLQQQQDGDNGDSSKS) are compositionally biased toward low complexity. A Phosphoserine modification is found at S910. A compositionally biased stretch (basic and acidic residues) spans 912–928 (LNERDSSASVDNRELEQ). Positions 929–938 (HIQTSDPENF) are enriched in polar residues. The residue at position 933 (S933) is a Phosphoserine. The span at 940–950 (SEERSDSDVNN) shows a compositional bias: basic and acidic residues. Residues 953-968 (STSSVDSDILSSSHSS) show a composition bias toward low complexity. Over residues 997-1006 (KANEGKKETW) the composition is skewed to basic and acidic residues. Residues 1007–1020 (DTAEEDSGTDSEYD) are compositionally biased toward acidic residues. S1013 is subject to Phosphoserine. T1015 bears the Phosphothreonine mark. S1017 bears the Phosphoserine mark.

The protein belongs to the peptidase C19 family. In terms of assembly, interacts with BTRC and FBXW11. Interacts with POLB. As to expression, expressed in skeletal muscle, heart and testis.

It is found in the cytoplasm. The enzyme catalyses Thiol-dependent hydrolysis of ester, thioester, amide, peptide and isopeptide bonds formed by the C-terminal Gly of ubiquitin (a 76-residue protein attached to proteins as an intracellular targeting signal).. Its function is as follows. Ubiquitin-specific protease that specifically deubiquitinates monoubiquitinated DNA polymerase beta (POLB), stabilizing POLB thereby playing a role in base-excision repair (BER). Acts as a regulator of cell growth and genome integrity. May also indirectly regulate CDC25A expression at a transcriptional level. This chain is Ubiquitin carboxyl-terminal hydrolase 47 (USP47), found in Homo sapiens (Human).